The sequence spans 309 residues: UDP-N-acetylenolpyruvoylglucosamine reductase (309 aa).

Positions 34–198 (RVGGPAEVMF…VRARLHARPG (165 aa)) constitute an FAD-binding PCMH-type domain. Arginine 178 is a catalytic residue. Catalysis depends on serine 227, which acts as the Proton donor. Residue glutamate 297 is part of the active site.

It belongs to the MurB family. FAD serves as cofactor.

It localises to the cytoplasm. It catalyses the reaction UDP-N-acetyl-alpha-D-muramate + NADP(+) = UDP-N-acetyl-3-O-(1-carboxyvinyl)-alpha-D-glucosamine + NADPH + H(+). Its pathway is cell wall biogenesis; peptidoglycan biosynthesis. In terms of biological role, cell wall formation. This is UDP-N-acetylenolpyruvoylglucosamine reductase from Acidiphilium cryptum (strain JF-5).